A 394-amino-acid polypeptide reads, in one-letter code: Multidrug resistance protein D (394 aa).

Over 1-8 the chain is Cytoplasmic; sequence MKRQRNVN. Residues 9–29 form a helical membrane-spanning segment; sequence LLLMLVLLVAVGQMAQTIYIP. At 30–46 the chain is on the periplasmic side; the sequence is AIADMARDLNVREGAVQ. A helical transmembrane segment spans residues 47–67; the sequence is SVMGAYLLTYGVSQLFYGPIS. The Cytoplasmic segment spans residues 68–73; the sequence is DRVGRR. Residues 74 to 94 traverse the membrane as a helical segment; sequence PVILVGMSIFMLATLVAVTTS. Position 95 (Ser95) is a topological domain, periplasmic. A helical membrane pass occupies residues 96–116; sequence LTVLIAASAMQGMGTGVGGVM. Residues 117–134 lie on the Cytoplasmic side of the membrane; it reads ARTLPRDLYERTQLRHAN. Residues 135-155 form a helical membrane-spanning segment; sequence SLLNMGILVSPLLAPLIGGLL. The Periplasmic segment spans residues 156 to 162; sequence DTMWNWR. A helical membrane pass occupies residues 163 to 183; that stretch reads ACYLFLLVLCAGVTFSMARWM. Residues 184–212 are Cytoplasmic-facing; sequence PETRPVDAPRTRLLTSYKTLFGNSGFNCY. Residues 213–233 traverse the membrane as a helical segment; the sequence is LLMLIGGLAGIAAFEACSGVL. Residues 234-242 are Periplasmic-facing; it reads MGAVLGLSS. A helical membrane pass occupies residues 243–263; that stretch reads MTVSILFILPIPAAFFGAWFA. At 264–276 the chain is on the cytoplasmic side; that stretch reads GRPNKRFSTLMWQ. Residues 277–297 form a helical membrane-spanning segment; the sequence is SVICCLLAGLLMWIPDWFGVM. Residue Asn298 is a topological domain, periplasmic. A helical membrane pass occupies residues 299-319; the sequence is VWTLLVPAALFFFGAGMLFPL. Over 320 to 329 the chain is Cytoplasmic; it reads ATSGAMEPFP. A helical membrane pass occupies residues 330–350; the sequence is FLAGTAGALVGGLQNIGSGVL. Topologically, residues 351–364 are periplasmic; the sequence is ASLSAMLPQTGQGS. Residues 365 to 385 form a helical membrane-spanning segment; the sequence is LGLLMTLMGLLIVLCWLPLAT. Residues 386–394 lie on the Cytoplasmic side of the membrane; it reads RMSHQGQPV.

Belongs to the major facilitator superfamily.

The protein localises to the cell inner membrane. In terms of biological role, multidrug resistance pump that participates in a low energy shock adaptive response. This Escherichia coli (strain K12) protein is Multidrug resistance protein D (emrD).